Reading from the N-terminus, the 394-residue chain is Probable nucleoredoxin 2 (394 aa).

2 consecutive Thioredoxin domains span residues Gly15–Glu176 and Ser180–Asp327.

Belongs to the nucleoredoxin family.

The catalysed reaction is [protein]-dithiol + NAD(+) = [protein]-disulfide + NADH + H(+). It catalyses the reaction [protein]-dithiol + NADP(+) = [protein]-disulfide + NADPH + H(+). Its function is as follows. Probable thiol-disulfide oxidoreductase that may participate in various redox reactions. The polypeptide is Probable nucleoredoxin 2 (Oryza sativa subsp. japonica (Rice)).